A 1458-amino-acid chain; its full sequence is DNA polymerase alpha catalytic subunit (1458 aa).

2 disordered regions span residues 1 to 25 (MSDS…RKEA) and 89 to 119 (DLED…SVSK). A compositionally biased stretch (basic and acidic residues) spans 15–25 (EKTEKSGRKEA). DNA-binding stretches follow at residues 650-715 (RINS…VHQI) and 1241-1373 (QFRA…ACSK). Zn(2+)-binding residues include Cys-1280, Cys-1283, Cys-1307, Cys-1312, Cys-1345, Cys-1350, Cys-1368, and Cys-1371. The CysA-type zinc finger occupies 1280–1310 (CPKCGTENIYDNVFDGSGLQIEPGLKRCSKP). The CysB motif motif lies at 1345-1371 (CEEKTCQNRTRRLPLSFSRNGPICQAC).

It belongs to the DNA polymerase type-B family. The DNA polymerase alpha complex is composed of four subunits: the catalytic subunit POLA1, the regulatory subunit POLA2, and the small and the large primase subunits PRIM1 and PRIM2 respectively. Interacts with PARP1; this interaction functions as part of the control of replication fork progression. Interacts with MCM10 and WDHD1; these interactions recruit the polymerase alpha complex to the pre-replicative complex bound to DNA. Interacts with RPA1; this interaction stabilizes the replicative complex and reduces the misincorporation rate of DNA polymerase alpha by acting as a fidelity clamp.

It is found in the nucleus. It catalyses the reaction DNA(n) + a 2'-deoxyribonucleoside 5'-triphosphate = DNA(n+1) + diphosphate. In terms of biological role, plays an essential role in the initiation of DNA replication. During the S phase of the cell cycle, the DNA polymerase alpha complex (composed of a catalytic subunit POLA1/p180, a regulatory subunit POLA2/p70 and two primase subunits PRIM1/p49 and PRIM2/p58) is recruited to DNA at the replicative forks via direct interactions with MCM10 and WDHD1. The primase subunit of the polymerase alpha complex initiates DNA synthesis by oligomerising short RNA primers on both leading and lagging strands. These primers are initially extended by the polymerase alpha catalytic subunit and subsequently transferred to polymerase delta and polymerase epsilon for processive synthesis on the lagging and leading strand, respectively. The reason this transfer occurs is because the polymerase alpha has limited processivity and lacks intrinsic 3' exonuclease activity for proofreading error, and therefore is not well suited for replicating long complexes. The protein is DNA polymerase alpha catalytic subunit (pola1) of Xenopus laevis (African clawed frog).